Reading from the N-terminus, the 454-residue chain is UDP-N-acetylmuramate--L-alanine ligase (454 aa).

G109–T115 is a binding site for ATP.

This sequence belongs to the MurCDEF family.

The protein resides in the cytoplasm. It carries out the reaction UDP-N-acetyl-alpha-D-muramate + L-alanine + ATP = UDP-N-acetyl-alpha-D-muramoyl-L-alanine + ADP + phosphate + H(+). The protein operates within cell wall biogenesis; peptidoglycan biosynthesis. Cell wall formation. This Protochlamydia amoebophila (strain UWE25) protein is UDP-N-acetylmuramate--L-alanine ligase.